The sequence spans 230 residues: MTTNMLPLHPYWPRHLRLDNFVPNDLPTWHILVGLFSFSGVLIVITWLLSSRVSVVPLGTGRRLALCWFAVCTFIHLVIEGWFSFYHEILLEDQAFLSQLWKEYSKGDSRYILSDGFIVCMESVTACLWGPLSLWVVIAFLRHQPFRFVLQLVVSVGQIYGDVLYFLTELRDGFQHGELGHPLYFWFYFVIMNAIWLVIPGILVFDAIKHLTNAQSMLDNKVMKIKSKHN.

Position 2 is an N-acetylthreonine (threonine 2). Helical transmembrane passes span 29–49, 66–86, 121–141, and 185–205; these read WHILVGLFSFSGVLIVITWLL, LCWFAVCTFIHLVIEGWFSFY, MESVTACLWGPLSLWVVIAFL, and FWFYFVIMNAIWLVIPGILVF. One can recognise an EXPERA domain in the interval 61–204; the sequence is GRRLALCWFA…IWLVIPGILV (144 aa).

The protein belongs to the EBP family. Expressed in liver.

Its subcellular location is the endoplasmic reticulum membrane. The protein localises to the nucleus envelope. It localises to the cytoplasmic vesicle. The catalysed reaction is lathosterol = 5alpha-cholest-8-en-3beta-ol. It catalyses the reaction zymosterol = 5alpha-cholesta-7,24-dien-3beta-ol. The enzyme catalyses 5,6alpha-epoxy-5alpha-cholestan-3beta-ol + H2O = 5alpha-cholestane-3beta,5,6beta-triol. It carries out the reaction 5,6beta-epoxy-5beta-cholestan-3beta-ol + H2O = 5alpha-cholestane-3beta,5,6beta-triol. It functions in the pathway steroid biosynthesis; cholesterol biosynthesis. With respect to regulation, enzymatic activity is induced by 25-hydroxycholesterol, cholestyramine and lovastatin. Its function is as follows. Isomerase that catalyzes the conversion of Delta(8)-sterols to their corresponding Delta(7)-isomers. Functionally, component of the microsomal antiestrogen binding site (AEBS), a multiproteic complex at the ER membrane that consists of an association between EBP and 7-dehydrocholesterol reductase/DHCR7. This complex is responsible for cholesterol-5,6-epoxide hydrolase (ChEH) activity, which consists in the hydration of cholesterol-5,6-epoxides (5,6-EC) into cholestane-3beta,5alpha,6beta-triol (CT). The precise role of each component of this complex has not been described yet. The chain is 3-beta-hydroxysteroid-Delta(8),Delta(7)-isomerase from Rattus norvegicus (Rat).